Reading from the N-terminus, the 207-residue chain is CASP-like protein 1D1 (207 aa).

The Cytoplasmic segment spans residues 1 to 40; that stretch reads MATVDGTTAPSSGGKTATVALESGGGRYGGPAPAKCSGAN. The chain crosses the membrane as a helical span at residues 41-61; the sequence is LALRALLFAVSLSALVVLVTA. Residues 62–89 lie on the Extracellular side of the membrane; that stretch reads KQTVMVPFVIRPPQFILAPVPAKYTHSP. A helical transmembrane segment spans residues 90–110; sequence ALIYLLAALCATCFYSLITAI. Over 111 to 124 the chain is Cytoplasmic; sequence SSVRLLSSSACSAK. The chain crosses the membrane as a helical span at residues 125–145; it reads TLFYLILLDVFYAAVMASATG. Residues 146-176 are Extracellular-facing; the sequence is TAGAVAWVGLKGNSHTRWNKICNVYGKFCRH. Residues 177–197 form a helical membrane-spanning segment; it reads IGSSTFLALIAAIVLVLLAFL. Residues 198-207 are Cytoplasmic-facing; the sequence is NAYSLYRRSR.

Belongs to the Casparian strip membrane proteins (CASP) family. As to quaternary structure, homodimer and heterodimers.

It is found in the cell membrane. In Oryza sativa subsp. japonica (Rice), this protein is CASP-like protein 1D1.